The following is a 361-amino-acid chain: tRNA/tmRNA (uracil-C(5))-methyltransferase (361 aa).

S-adenosyl-L-methionine contacts are provided by glutamine 183, tyrosine 211, asparagine 216, glutamate 232, and aspartate 294. The active-site Nucleophile is cysteine 319. Glutamate 353 acts as the Proton acceptor in catalysis.

The protein belongs to the class I-like SAM-binding methyltransferase superfamily. RNA M5U methyltransferase family. TrmA subfamily.

It catalyses the reaction uridine(54) in tRNA + S-adenosyl-L-methionine = 5-methyluridine(54) in tRNA + S-adenosyl-L-homocysteine + H(+). The catalysed reaction is uridine(341) in tmRNA + S-adenosyl-L-methionine = 5-methyluridine(341) in tmRNA + S-adenosyl-L-homocysteine + H(+). Functionally, dual-specificity methyltransferase that catalyzes the formation of 5-methyluridine at position 54 (m5U54) in all tRNAs, and that of position 341 (m5U341) in tmRNA (transfer-mRNA). In Acinetobacter baylyi (strain ATCC 33305 / BD413 / ADP1), this protein is tRNA/tmRNA (uracil-C(5))-methyltransferase.